We begin with the raw amino-acid sequence, 350 residues long: GTPase Obg (350 aa).

Positions 1–159 (MKLVDEAEIL…RLLKLELKLL (159 aa)) constitute an Obg domain. The OBG-type G domain maps to 160–337 (ADVGLLGFPN…IMKDVMAFFD (178 aa)). GTP is bound by residues 166-173 (GFPNAGKS), 191-195 (FTTLY), 213-216 (DVPG), 287-290 (NKAD), and 318-320 (SAL). Mg(2+) is bound by residues Ser-173 and Thr-193.

Belongs to the TRAFAC class OBG-HflX-like GTPase superfamily. OBG GTPase family. As to quaternary structure, monomer. Requires Mg(2+) as cofactor.

The protein localises to the cytoplasm. Functionally, an essential GTPase which binds GTP, GDP and possibly (p)ppGpp with moderate affinity, with high nucleotide exchange rates and a fairly low GTP hydrolysis rate. Plays a role in control of the cell cycle, stress response, ribosome biogenesis and in those bacteria that undergo differentiation, in morphogenesis control. The sequence is that of GTPase Obg from Xanthomonas campestris pv. campestris (strain 8004).